The following is a 195-amino-acid chain: Molybdenum cofactor guanylyltransferase (195 aa).

Residues 10-12 (LAG), lysine 23, asparagine 51, aspartate 69, and aspartate 99 contribute to the GTP site. Aspartate 99 lines the Mg(2+) pocket.

It belongs to the MobA family. Monomer. Mg(2+) serves as cofactor.

It localises to the cytoplasm. It catalyses the reaction Mo-molybdopterin + GTP + H(+) = Mo-molybdopterin guanine dinucleotide + diphosphate. Transfers a GMP moiety from GTP to Mo-molybdopterin (Mo-MPT) cofactor (Moco or molybdenum cofactor) to form Mo-molybdopterin guanine dinucleotide (Mo-MGD) cofactor. This chain is Molybdenum cofactor guanylyltransferase, found in Histophilus somni (strain 129Pt) (Haemophilus somnus).